Here is a 507-residue protein sequence, read N- to C-terminus: ATP synthase subunit alpha, plastid (507 aa).

Residue 170-177 (GDRQTGKT) coordinates ATP.

The protein belongs to the ATPase alpha/beta chains family. As to quaternary structure, F-type ATPases have 2 components, CF(1) - the catalytic core - and CF(0) - the membrane proton channel. CF(1) has five subunits: alpha(3), beta(3), gamma(1), delta(1), epsilon(1). CF(0) has four main subunits: a, b, b' and c.

The protein resides in the plastid membrane. It carries out the reaction ATP + H2O + 4 H(+)(in) = ADP + phosphate + 5 H(+)(out). Functionally, produces ATP from ADP in the presence of a proton gradient across the membrane. The alpha chain is a regulatory subunit. The chain is ATP synthase subunit alpha, plastid from Cuscuta obtusiflora (Peruvian dodder).